Here is a 136-residue protein sequence, read N- to C-terminus: Single-stranded DNA-binding protein 1 (136 aa).

One can recognise an SSB domain in the interval 4–109; it reads LNKMQLIGNL…IMAKEMQMLG (106 aa). Residues 109–136 are disordered; sequence GKKQDNNKVGNARHGDALPADEDDYYDF. The span at 127 to 136 shows a compositional bias: acidic residues; it reads PADEDDYYDF.

In terms of assembly, homotetramer.

In Xylella fastidiosa (strain 9a5c), this protein is Single-stranded DNA-binding protein 1 (ssb1).